The sequence spans 144 residues: D-aminoacyl-tRNA deacylase (144 aa).

The Gly-cisPro motif, important for rejection of L-amino acids signature appears at 136 to 137; that stretch reads GP.

Belongs to the DTD family. Homodimer.

It is found in the cytoplasm. The enzyme catalyses glycyl-tRNA(Ala) + H2O = tRNA(Ala) + glycine + H(+). It catalyses the reaction a D-aminoacyl-tRNA + H2O = a tRNA + a D-alpha-amino acid + H(+). Functionally, an aminoacyl-tRNA editing enzyme that deacylates mischarged D-aminoacyl-tRNAs. Also deacylates mischarged glycyl-tRNA(Ala), protecting cells against glycine mischarging by AlaRS. Acts via tRNA-based rather than protein-based catalysis; rejects L-amino acids rather than detecting D-amino acids in the active site. By recycling D-aminoacyl-tRNA to D-amino acids and free tRNA molecules, this enzyme counteracts the toxicity associated with the formation of D-aminoacyl-tRNA entities in vivo and helps enforce protein L-homochirality. In Corynebacterium efficiens (strain DSM 44549 / YS-314 / AJ 12310 / JCM 11189 / NBRC 100395), this protein is D-aminoacyl-tRNA deacylase.